The chain runs to 81 residues: Photosystem I iron-sulfur center (81 aa).

2 consecutive 4Fe-4S ferredoxin-type domains span residues 2–31 and 39–68; these read SHTV…MIPW and IASS…VRVY. Positions 11, 14, 17, 21, 48, 51, 54, and 58 each coordinate [4Fe-4S] cluster.

The eukaryotic PSI reaction center is composed of at least 11 subunits. It depends on [4Fe-4S] cluster as a cofactor.

Its subcellular location is the plastid. The protein resides in the chloroplast thylakoid membrane. The catalysed reaction is reduced [plastocyanin] + hnu + oxidized [2Fe-2S]-[ferredoxin] = oxidized [plastocyanin] + reduced [2Fe-2S]-[ferredoxin]. Functionally, apoprotein for the two 4Fe-4S centers FA and FB of photosystem I (PSI); essential for photochemical activity. FB is the terminal electron acceptor of PSI, donating electrons to ferredoxin. The C-terminus interacts with PsaA/B/D and helps assemble the protein into the PSI complex. Required for binding of PsaD and PsaE to PSI. PSI is a plastocyanin-ferredoxin oxidoreductase, converting photonic excitation into a charge separation, which transfers an electron from the donor P700 chlorophyll pair to the spectroscopically characterized acceptors A0, A1, FX, FA and FB in turn. This is Photosystem I iron-sulfur center from Chaetosphaeridium globosum (Charophycean green alga).